The following is a 34-amino-acid chain: MEVNILAFIATALFILVPTAFLLIIYVKTVSKND.

A helical membrane pass occupies residues 5-25 (ILAFIATALFILVPTAFLLII).

It belongs to the PsbM family. PSII is composed of 1 copy each of membrane proteins PsbA, PsbB, PsbC, PsbD, PsbE, PsbF, PsbH, PsbI, PsbJ, PsbK, PsbL, PsbM, PsbT, PsbX, PsbY, PsbZ, Psb30/Ycf12, at least 3 peripheral proteins of the oxygen-evolving complex and a large number of cofactors. It forms dimeric complexes.

It is found in the plastid. It localises to the chloroplast thylakoid membrane. In terms of biological role, one of the components of the core complex of photosystem II (PSII). PSII is a light-driven water:plastoquinone oxidoreductase that uses light energy to abstract electrons from H(2)O, generating O(2) and a proton gradient subsequently used for ATP formation. It consists of a core antenna complex that captures photons, and an electron transfer chain that converts photonic excitation into a charge separation. This subunit is found at the monomer-monomer interface. The chain is Photosystem II reaction center protein M from Ceratophyllum demersum (Rigid hornwort).